Consider the following 241-residue polypeptide: Adenosylcobinamide-GDP ribazoletransferase (241 aa).

The next 5 membrane-spanning stretches (helical) occupy residues 24-44 (IVFF…SIFY), 48-68 (FINQ…IYGF), 103-123 (VVTF…FNSI), 175-195 (VIIL…FSLI), and 218-238 (IIGF…LISF).

The protein belongs to the CobS family. Mg(2+) serves as cofactor.

It is found in the cell membrane. The catalysed reaction is alpha-ribazole + adenosylcob(III)inamide-GDP = adenosylcob(III)alamin + GMP + H(+). The enzyme catalyses alpha-ribazole 5'-phosphate + adenosylcob(III)inamide-GDP = adenosylcob(III)alamin 5'-phosphate + GMP + H(+). It functions in the pathway cofactor biosynthesis; adenosylcobalamin biosynthesis; adenosylcobalamin from cob(II)yrinate a,c-diamide: step 7/7. Its function is as follows. Joins adenosylcobinamide-GDP and alpha-ribazole to generate adenosylcobalamin (Ado-cobalamin). Also synthesizes adenosylcobalamin 5'-phosphate from adenosylcobinamide-GDP and alpha-ribazole 5'-phosphate. In Picrophilus torridus (strain ATCC 700027 / DSM 9790 / JCM 10055 / NBRC 100828 / KAW 2/3), this protein is Adenosylcobinamide-GDP ribazoletransferase.